A 361-amino-acid polypeptide reads, in one-letter code: Solute carrier family 25 member 3 (361 aa).

The N-terminal 49 residues, 1-49 (MFSSVAHLARANPFNTPHLQLVHDGLGDFRSRPPGPTGQPRRPRNLAAA), are a transit peptide targeting the mitochondrion. The segment at 25–44 (GLGDFRSRPPGPTGQPRRPR) is disordered. At 50–62 (AVEEYSCEFGSAK) the chain is on the mitochondrial intermembrane side. Solcar repeat units lie at residues 62–146 (KYYA…FKVL), 159–243 (WRTS…TVEA), and 260–338 (EQLV…VKVY). Residues 63-85 (YYALCGFGGVLSCGLTHTAVVPL) traverse the membrane as a helical segment. At 86-120 (DLVKCRMQVDPQKYKGIFNGFSVTLKEDGVRGLAK) the chain is on the mitochondrial matrix side. Lys98 is modified (N6-acetyllysine). Position 111 is an N6-methyllysine (Lys111). Residues 121 to 140 (GWAPTFLGYSMQGLCKFGFY) traverse the membrane as a helical segment. Topologically, residues 141–160 (EVFKVLYSNMLGEENTYLWR) are mitochondrial intermembrane. A helical membrane pass occupies residues 161 to 182 (TSLYLAASASAEFFADIALAPM). Over 183–217 (EAAKVRIQTQPGYANTLRDAAPKMYKEEGLKAFYK) the chain is Mitochondrial matrix. Phosphotyrosine is present on Tyr195. An N6-acetyllysine modification is found at Lys208. The helical transmembrane segment at 218–237 (GVAPLWMRQIPYTMMKFACF) threads the bilayer. The Mitochondrial intermembrane segment spans residues 238–260 (ERTVEALYKFVVPKPRSECSKPE). A helical membrane pass occupies residues 261–283 (QLVVTFVAGYIAGVFCAIVSHPA). Residues 284–313 (DSVVSVLNKEKGSSASLVLKRLGFKGVWKG) lie on the Mitochondrial matrix side of the membrane. Residues 314–332 (LFARIIMIGTLTALQWFIY) form a helical membrane-spanning segment. The Mitochondrial intermembrane segment spans residues 333 to 361 (DSVKVYFRLPRPPPPEMPESLKKKLGLTQ).

The protein belongs to the mitochondrial carrier (TC 2.A.29) family. As to quaternary structure, interacts with PPIF; the interaction is impaired by CsA.

It is found in the mitochondrion inner membrane. The enzyme catalyses phosphate(in) + H(+)(in) = phosphate(out) + H(+)(out). Inorganic ion transporter that transports phosphate or copper ions across the mitochondrial inner membrane into the matrix compartment. Mediates proton-coupled symport of phosphate ions necessary for mitochondrial oxidative phosphorylation of ADP to ATP. Transports copper ions probably in the form of anionic copper(I) complexes to maintain mitochondrial matrix copper pool and to supply copper for cytochrome C oxidase complex assembly. May also play a role in regulation of the mitochondrial permeability transition pore (mPTP). In Pongo abelii (Sumatran orangutan), this protein is Solute carrier family 25 member 3.